A 412-amino-acid polypeptide reads, in one-letter code: Putative competence-damage inducible protein (412 aa).

Belongs to the CinA family.

The chain is Putative competence-damage inducible protein from Clostridium perfringens (strain 13 / Type A).